Reading from the N-terminus, the 29-residue chain is Glucagon (29 aa).

The protein belongs to the glucagon family.

It localises to the secreted. Its function is as follows. Glucagon plays a key role in glucose metabolism and homeostasis. Regulates blood glucose by increasing gluconeogenesis and decreasing glycolysis. The chain is Glucagon (gcg) from Lampetra fluviatilis (European river lamprey).